A 671-amino-acid polypeptide reads, in one-letter code: MSELEEDFAKILMLKEERIKELEKRLSEKEEEIQELKRKLHKCQSVLPVPSTHIGPRTTRAQGISAEPQTYRSFHDLRQAFRKFTKSERSKDLIKEAILDNDFMKNLELSQIQEIVDCMYPVEYGKDSCIIKEGDVGSLVYVMEDGKVEVTKEGVKLCTMGPGKVFGELAILYNCTRTATVKTLVNVKLWAIDRQCFQTIMMRTGLIKHTEYMEFLKSVPTFQSLPDEILSKLADVLEETHYENGEYIIRQGARGDTFFIISKGQVNVTREDSPSEDPVFLRTLGKGDWFGEKALQGEDVRTANVIAAEAVTCLVIDRDSFKHLIGGLDDVSNKAYEDAEAKAKYEAEAAFFANLKLSDFNIIDTLGVGGFGRVELVQLKSEESKTFAMKILKKRHIVDTRQQEHIRSEKQIMQGAHSDFIVRLYRTFKDSKYLYMLMEACLGGELWTILRDRGSFEDSTTRFYTACVVEAFAYLHSKGIIYRDLKPENLILDHRGYAKLVDFGFAKKIGFGKKTWTFCGTPEYVAPEIILNKGHDISADYWSLGILMYELLTGSPPFSGPDPMKTYNIILRGIDMIEFPKKIAKNAANLIKKLCRDNPSERLGNLKNGVKDIQKHKWFEGFNWEGLRKGTLTPPIIPSVASPTDTSNFDSFPEDSDEPPPDDNSGWDIDF.

Ser2 is modified (N-acetylserine). The stretch at 2 to 59 forms a coiled coil; it reads SELEEDFAKILMLKEERIKELEKRLSEKEEEIQELKRKLHKCQSVLPVPSTHIGPRTT. The tract at residues 2–102 is required for dimerization; it reads SELEEDFAKI…LIKEAILDND (101 aa). Positions 9 to 44 are leucine-zipper; that stretch reads AKILMLKEERIKELEKRLSEKEEEIQELKRKLHKCQ. The segment at 50 to 75 is autoinhibitory domain; sequence PSTHIGPRTTRAQGISAEPQTYRSFH. Thr59 bears the Phosphothreonine; by autocatalysis mark. The segment at 103-220 is cGMP-binding, high affinity; that stretch reads FMKNLELSQI…EYMEFLKSVP (118 aa). Residues 167 to 170, 177 to 178, Arg282, 291 to 294, 301 to 302, and Tyr336 contribute to the 3',5'-cyclic GMP site; these read GELA, RT, and GEKA. The interval 221–341 is cGMP-binding, low affinity; it reads TFQSLPDEIL…SNKAYEDAEA (121 aa). Residues 360–619 form the Protein kinase domain; that stretch reads FNIIDTLGVG…VKDIQKHKWF (260 aa). ATP is bound by residues 366–374 and Lys390; that span reads LGVGGFGRV. Asp484 functions as the Proton acceptor in the catalytic mechanism. Thr515 bears the Phosphothreonine mark. The 52-residue stretch at 620 to 671 folds into the AGC-kinase C-terminal domain; that stretch reads EGFNWEGLRKGTLTPPIIPSVASPTDTSNFDSFPEDSDEPPPDDNSGWDIDF. Residues 635-671 form a disordered region; the sequence is PIIPSVASPTDTSNFDSFPEDSDEPPPDDNSGWDIDF. The segment covering 652–661 has biased composition (acidic residues); it reads FPEDSDEPPP.

This sequence belongs to the protein kinase superfamily. AGC Ser/Thr protein kinase family. cGMP subfamily. In terms of assembly, isoform alpha: parallel homodimer or heterodimer and also heterotetramer. Interacts directly with PPP1R12A. Non-covalent dimer of dimer of PRKG1-PRKG1 and PPP1R12A-PPP1R12A. This interaction targets PRKG1 to stress fibers to mediate smooth muscle cell relaxation and vasodilation in responses to rises in cGMP. Isoform beta: antiparallel homodimer. Part of cGMP kinase signaling complex at least composed of ACTA2/alpha-actin, CNN1/calponin H1, PLN/phospholamban, PRKG1 and ITPR1. Interacts with IRAG1. Forms a stable complex with ITPR1, IRAG1, and isoform beta of PRKG1. Interacts with TRPC7 (via ankyrin repeat domain). Isoform alpha interacts with RGS2. Interacts with GTF2I. Post-translationally, autophosphorylation increases kinase activity. In terms of processing, 65 kDa monomer is produced by proteolytic cleavage. As to expression, detected in cerebellum, hippocampus, dorsomedial hypothalamus, medulla, subcommissural organ, cerebral cortex, amygdala, habenulae, various hypothalamic regions, olfactory bulb, pituitary gland, and retina. Isoform alpha is prominent in the cerebellum and medulla, whereas isoform Beta is predominant in the cortex, hippocampus, hypothalamus, and olfactory bulb.

It localises to the cytoplasm. The enzyme catalyses L-seryl-[protein] + ATP = O-phospho-L-seryl-[protein] + ADP + H(+). It catalyses the reaction L-threonyl-[protein] + ATP = O-phospho-L-threonyl-[protein] + ADP + H(+). With respect to regulation, in the absence of cGMP, PRKG1 activity is suppressed by autoinhibitory contacts. Functionally, serine/threonine protein kinase that acts as a key mediator of the nitric oxide (NO)/cGMP signaling pathway. GMP binding activates PRKG1, which phosphorylates serines and threonines on many cellular proteins. Numerous protein targets for PRKG1 phosphorylation are implicated in modulating cellular calcium, but the contribution of each of these targets may vary substantially among cell types. Proteins that are phosphorylated by PRKG1 regulate platelet activation and adhesion, smooth muscle contraction, cardiac function, gene expression, feedback of the NO-signaling pathway, and other processes involved in several aspects of the CNS like axon guidance, hippocampal and cerebellar learning, circadian rhythm and nociception. Smooth muscle relaxation is mediated through lowering of intracellular free calcium, by desensitization of contractile proteins to calcium, and by decrease in the contractile state of smooth muscle or in platelet activation. Regulates intracellular calcium levels via several pathways: phosphorylates IRAG1 and inhibits IP3-induced Ca(2+) release from intracellular stores, phosphorylation of KCNMA1 (BKCa) channels decreases intracellular Ca(2+) levels, which leads to increased opening of this channel. PRKG1 phosphorylates the canonical transient receptor potential channel (TRPC) family which inactivates the associated inward calcium current. Another mode of action of NO/cGMP/PKGI signaling involves PKGI-mediated inactivation of the Ras homolog gene family member A (RhoA). Phosphorylation of RHOA by PRKG1 blocks the action of this protein in myriad processes: regulation of RHOA translocation; decreasing contraction; controlling vesicle trafficking, reduction of myosin light chain phosphorylation resulting in vasorelaxation. Activation of PRKG1 by NO signaling also alters gene expression in a number of tissues. In smooth muscle cells, increased cGMP and PRKG1 activity influence expression of smooth muscle-specific contractile proteins, levels of proteins in the NO/cGMP signaling pathway, down-regulation of the matrix proteins osteopontin and thrombospondin-1 to limit smooth muscle cell migration and phenotype. Regulates vasodilator-stimulated phosphoprotein (VASP) functions in platelets and smooth muscle. In Mus musculus (Mouse), this protein is cGMP-dependent protein kinase 1 (Prkg1).